A 179-amino-acid chain; its full sequence is tRNA (cytidine(56)-2'-O)-methyltransferase (179 aa).

Residues Leu82, 112–116, and 130–137 each bind S-adenosyl-L-methionine; these read GAEKV and VGNQPHSE.

Belongs to the aTrm56 family. In terms of assembly, homodimer.

The protein localises to the cytoplasm. It catalyses the reaction cytidine(56) in tRNA + S-adenosyl-L-methionine = 2'-O-methylcytidine(56) in tRNA + S-adenosyl-L-homocysteine + H(+). Its function is as follows. Specifically catalyzes the AdoMet-dependent 2'-O-ribose methylation of cytidine at position 56 in tRNAs. In Methanococcus maripaludis (strain DSM 14266 / JCM 13030 / NBRC 101832 / S2 / LL), this protein is tRNA (cytidine(56)-2'-O)-methyltransferase.